The chain runs to 207 residues: MNHLAEIESLLYVAGDEGITLQHIARLIMLDEAAVRQLLTKLAKRYQEDEQSGLNLIQAADCYKLVTKKAYAGLLKAYFDGPVSTSISQAALEVLAIIVYRQPLTRIEIDEVRGVQSSGAIQTLLARQLIVEKGRKDAPGRPILYGTSDYFLDYFGLGSLKELPELEQMTLTDDTAESDNDSADLYYRQFEQTLNETGPETAPKGEQ.

The tract at residues 173–207 (DDTAESDNDSADLYYRQFEQTLNETGPETAPKGEQ) is disordered.

This sequence belongs to the ScpB family. In terms of assembly, homodimer. Homodimerization may be required to stabilize the binding of ScpA to the Smc head domains. Component of a cohesin-like complex composed of ScpA, ScpB and the Smc homodimer, in which ScpA and ScpB bind to the head domain of Smc. The presence of the three proteins is required for the association of the complex with DNA.

It localises to the cytoplasm. Its function is as follows. Participates in chromosomal partition during cell division. May act via the formation of a condensin-like complex containing Smc and ScpA that pull DNA away from mid-cell into both cell halves. This is Segregation and condensation protein B from Latilactobacillus sakei subsp. sakei (strain 23K) (Lactobacillus sakei subsp. sakei).